The chain runs to 297 residues: Putative F-box protein At2g19630 (297 aa).

Residues Thr-11 to Arg-60 enclose the F-box domain.

This chain is Putative F-box protein At2g19630, found in Arabidopsis thaliana (Mouse-ear cress).